The following is a 102-amino-acid chain: NAD(P)H-quinone oxidoreductase subunit 4L (102 aa).

3 helical membrane-spanning segments follow: residues 4–24 (LQFF…GLIV), 33–53 (MSIE…SNFV), and 65–85 (VFVI…VLGI).

The protein belongs to the complex I subunit 4L family. As to quaternary structure, NDH-1 can be composed of about 15 different subunits; different subcomplexes with different compositions have been identified which probably have different functions.

The protein resides in the cellular thylakoid membrane. It carries out the reaction a plastoquinone + NADH + (n+1) H(+)(in) = a plastoquinol + NAD(+) + n H(+)(out). It catalyses the reaction a plastoquinone + NADPH + (n+1) H(+)(in) = a plastoquinol + NADP(+) + n H(+)(out). In terms of biological role, NDH-1 shuttles electrons from an unknown electron donor, via FMN and iron-sulfur (Fe-S) centers, to quinones in the respiratory and/or the photosynthetic chain. The immediate electron acceptor for the enzyme in this species is believed to be plastoquinone. Couples the redox reaction to proton translocation, and thus conserves the redox energy in a proton gradient. Cyanobacterial NDH-1 also plays a role in inorganic carbon-concentration. The polypeptide is NAD(P)H-quinone oxidoreductase subunit 4L (Synechococcus sp. (strain JA-3-3Ab) (Cyanobacteria bacterium Yellowstone A-Prime)).